Here is a 939-residue protein sequence, read N- to C-terminus: Isoleucine--tRNA ligase (939 aa).

Positions 57 to 67 (PYANGEIHIGH) match the 'HIGH' region motif. E563 is a binding site for L-isoleucyl-5'-AMP. The short motif at 604 to 608 (KMSKS) is the 'KMSKS' region element. Position 607 (K607) interacts with ATP. Zn(2+)-binding residues include C902, C905, C922, and C925.

Belongs to the class-I aminoacyl-tRNA synthetase family. IleS type 1 subfamily. Monomer. Zn(2+) is required as a cofactor.

The protein resides in the cytoplasm. It catalyses the reaction tRNA(Ile) + L-isoleucine + ATP = L-isoleucyl-tRNA(Ile) + AMP + diphosphate. Catalyzes the attachment of isoleucine to tRNA(Ile). As IleRS can inadvertently accommodate and process structurally similar amino acids such as valine, to avoid such errors it has two additional distinct tRNA(Ile)-dependent editing activities. One activity is designated as 'pretransfer' editing and involves the hydrolysis of activated Val-AMP. The other activity is designated 'posttransfer' editing and involves deacylation of mischarged Val-tRNA(Ile). The protein is Isoleucine--tRNA ligase of Methylococcus capsulatus (strain ATCC 33009 / NCIMB 11132 / Bath).